The sequence spans 555 residues: GPI-anchor transamidase component PIGS (555 aa).

The Cytoplasmic portion of the chain corresponds to 2-18 (AAAGAAATDLEVVRGKR). Residues R15 and R18 each contribute to the a cardiolipin site. Residues 19-39 (SALFFAAVAILLGLPLWWKTT) form a helical membrane-spanning segment. Residues 40 to 517 (ETYRAPLPYS…LHLLYFPDDQ (478 aa)) are Lumenal-facing. N-linked (GlcNAc...) asparagine glycosylation is found at N267 and N370. Residues 518-532 (KFAIYIPLFLPMAVP) traverse the membrane as a helical segment. Residues 533 to 555 (ILLSLVKIFQETRKSWKKPEKID) are Cytoplasmic-facing.

This sequence belongs to the PIGS family. Heteropentamer. Part of the GPI-anchor transamidase complex, consisting of PIGK, PIGT, PIGS, PIGU and GAA1.

Its subcellular location is the endoplasmic reticulum membrane. The protein operates within glycolipid biosynthesis; glycosylphosphatidylinositol-anchor biosynthesis. In terms of biological role, component of the glycosylphosphatidylinositol-anchor (GPI-anchor) transamidase (GPI-T) complex that catalyzes the formation of the linkage between a proprotein and a GPI-anchor and participates in GPI anchored protein biosynthesis. The polypeptide is GPI-anchor transamidase component PIGS (Mus musculus (Mouse)).